The following is a 475-amino-acid chain: Putative aldehyde dehydrogenase SERP1729 (475 aa).

An NAD(+)-binding site is contributed by 201 to 207; the sequence is GDGSGVG. Residues Glu245 and Cys279 contribute to the active site.

This sequence belongs to the aldehyde dehydrogenase family.

It catalyses the reaction an aldehyde + NAD(+) + H2O = a carboxylate + NADH + 2 H(+). The chain is Putative aldehyde dehydrogenase SERP1729 from Staphylococcus epidermidis (strain ATCC 35984 / DSM 28319 / BCRC 17069 / CCUG 31568 / BM 3577 / RP62A).